The primary structure comprises 318 residues: Ribosomal RNA small subunit methyltransferase H (318 aa).

S-adenosyl-L-methionine contacts are provided by residues 38 to 40, aspartate 58, tyrosine 86, aspartate 107, and glutamine 114; that span reads GGH.

This sequence belongs to the methyltransferase superfamily. RsmH family.

It localises to the cytoplasm. It carries out the reaction cytidine(1402) in 16S rRNA + S-adenosyl-L-methionine = N(4)-methylcytidine(1402) in 16S rRNA + S-adenosyl-L-homocysteine + H(+). In terms of biological role, specifically methylates the N4 position of cytidine in position 1402 (C1402) of 16S rRNA. The sequence is that of Ribosomal RNA small subunit methyltransferase H from Methylibium petroleiphilum (strain ATCC BAA-1232 / LMG 22953 / PM1).